Reading from the N-terminus, the 212-residue chain is Fibrillarin-like rRNA/tRNA 2'-O-methyltransferase (212 aa).

A disordered region spans residues 1 to 37 (MSEPNLPAGVERREIGGETRLATRGPPVYGEPTADGW). S-adenosyl-L-methionine-binding positions include 74–75 (TT), 90–91 (EF), 115–116 (DA), and 136–139 (DVAT).

Belongs to the methyltransferase superfamily. Fibrillarin family. In terms of assembly, interacts with nop5. Component of box C/D small ribonucleoprotein (sRNP) particles that contain rpl7ae, FlpA and nop5, plus a guide RNA.

Involved in pre-rRNA and tRNA processing. Utilizes the methyl donor S-adenosyl-L-methionine to catalyze the site-specific 2'-hydroxyl methylation of ribose moieties in rRNA and tRNA. Site specificity is provided by a guide RNA that base pairs with the substrate. Methylation occurs at a characteristic distance from the sequence involved in base pairing with the guide RNA. The protein is Fibrillarin-like rRNA/tRNA 2'-O-methyltransferase of Halorubrum lacusprofundi (strain ATCC 49239 / DSM 5036 / JCM 8891 / ACAM 34).